A 545-amino-acid polypeptide reads, in one-letter code: Glucose-6-phosphate isomerase (545 aa).

Glu351 functions as the Proton donor in the catalytic mechanism. Catalysis depends on residues His382 and Lys510.

Belongs to the GPI family.

The protein localises to the cytoplasm. It catalyses the reaction alpha-D-glucose 6-phosphate = beta-D-fructose 6-phosphate. The protein operates within carbohydrate biosynthesis; gluconeogenesis. Its pathway is carbohydrate degradation; glycolysis; D-glyceraldehyde 3-phosphate and glycerone phosphate from D-glucose: step 2/4. Functionally, catalyzes the reversible isomerization of glucose-6-phosphate to fructose-6-phosphate. The sequence is that of Glucose-6-phosphate isomerase from Shewanella loihica (strain ATCC BAA-1088 / PV-4).